The sequence spans 861 residues: DNA mismatch repair protein MutS (861 aa).

618–625 is an ATP binding site; it reads GPNMGGKS.

This sequence belongs to the DNA mismatch repair MutS family.

Functionally, this protein is involved in the repair of mismatches in DNA. It is possible that it carries out the mismatch recognition step. This protein has a weak ATPase activity. In Shewanella sp. (strain MR-7), this protein is DNA mismatch repair protein MutS.